The primary structure comprises 73 residues: Translation initiation factor IF-1 (73 aa).

One can recognise an S1-like domain in the interval 1-73 (MAKKQGAIEI…TRGRIVYRYK (73 aa)).

Belongs to the IF-1 family. As to quaternary structure, component of the 30S ribosomal translation pre-initiation complex which assembles on the 30S ribosome in the order IF-2 and IF-3, IF-1 and N-formylmethionyl-tRNA(fMet); mRNA recruitment can occur at any time during PIC assembly.

It is found in the cytoplasm. In terms of biological role, one of the essential components for the initiation of protein synthesis. Stabilizes the binding of IF-2 and IF-3 on the 30S subunit to which N-formylmethionyl-tRNA(fMet) subsequently binds. Helps modulate mRNA selection, yielding the 30S pre-initiation complex (PIC). Upon addition of the 50S ribosomal subunit IF-1, IF-2 and IF-3 are released leaving the mature 70S translation initiation complex. This Streptomyces coelicolor (strain ATCC BAA-471 / A3(2) / M145) protein is Translation initiation factor IF-1.